Here is a 572-residue protein sequence, read N- to C-terminus: Proline--tRNA ligase (572 aa).

Belongs to the class-II aminoacyl-tRNA synthetase family. ProS type 1 subfamily. As to quaternary structure, homodimer.

The protein resides in the cytoplasm. It carries out the reaction tRNA(Pro) + L-proline + ATP = L-prolyl-tRNA(Pro) + AMP + diphosphate. Functionally, catalyzes the attachment of proline to tRNA(Pro) in a two-step reaction: proline is first activated by ATP to form Pro-AMP and then transferred to the acceptor end of tRNA(Pro). As ProRS can inadvertently accommodate and process non-cognate amino acids such as alanine and cysteine, to avoid such errors it has two additional distinct editing activities against alanine. One activity is designated as 'pretransfer' editing and involves the tRNA(Pro)-independent hydrolysis of activated Ala-AMP. The other activity is designated 'posttransfer' editing and involves deacylation of mischarged Ala-tRNA(Pro). The misacylated Cys-tRNA(Pro) is not edited by ProRS. The polypeptide is Proline--tRNA ligase (Dichelobacter nodosus (strain VCS1703A)).